Consider the following 345-residue polypeptide: Green-sensitive opsin (345 aa).

Over 1–37 the chain is Extracellular; the sequence is MENGTEGKNFYIPMNNRTGLVRSPYEYPQYYLADPWQ. Asn3 and Asn16 each carry an N-linked (GlcNAc...) asparagine glycan. The chain crosses the membrane as a helical span at residues 38-62; the sequence is FKLLGIYMFFLILTGFPINALTLVV. Over 63 to 74 the chain is Cytoplasmic; it reads TAQNKKLRQPLN. A helical transmembrane segment spans residues 75 to 100; it reads FILVNLAVAGLIMVCFGFTVCIYSCM. Topologically, residues 101–114 are extracellular; it reads VGYFSLGPLGCTIE. An intrachain disulfide couples Cys111 to Cys188. A helical transmembrane segment spans residues 115–134; the sequence is GFMATLGGQVSLWSLVVLAI. The Cytoplasmic segment spans residues 135–153; the sequence is ERYIVVCKPMGSFKFTATH. The helical transmembrane segment at 154-177 threads the bilayer; that stretch reads SAAGCAFTWIMASSCAVPPLVGWS. The Extracellular segment spans residues 178 to 203; the sequence is RYIPEGIQVSCGPDYYTLAPGFNNES. N-linked (GlcNAc...) asparagine glycosylation occurs at Asn201. The chain crosses the membrane as a helical span at residues 204–231; it reads FVMYMFSCHFCVPVFTIFFTYGSLVMTV. Over 232–253 the chain is Cytoplasmic; it reads KAAAAQQQDSASTQKAEKEVTR. A helical transmembrane segment spans residues 254 to 277; the sequence is MCFLMVLGFLLAWVPYASYAAWIF. Residues 278-285 lie on the Extracellular side of the membrane; it reads FNRGAAFS. The helical transmembrane segment at 286–310 threads the bilayer; the sequence is AMSMAIPSFFSKSSALFNPIIYILL. Residue Lys297 is modified to N6-(retinylidene)lysine. Residues 311 to 345 are Cytoplasmic-facing; that stretch reads NKQFRNCMLATIGMGGMVEDETSVSTSKTEVSTAA.

It belongs to the G-protein coupled receptor 1 family. Opsin subfamily. Phosphorylated on some or all of the serine and threonine residues present in the C-terminal region. As to expression, the color pigments are found in the cone photoreceptor cells.

The protein localises to the membrane. Visual pigments are the light-absorbing molecules that mediate vision. They consist of an apoprotein, opsin, covalently linked to cis-retinal. In Oryzias latipes (Japanese rice fish), this protein is Green-sensitive opsin.